The following is a 56-amino-acid chain: TauPI-stichotoxin-Hcr2d (56 aa).

In terms of domain architecture, BPTI/Kunitz inhibitor spans 4 to 54; that stretch reads CLEPKVVGPCTAYFPRFYFNSETGKCTPFIYGGCEGNGNNFETLRACRGIC. Disulfide bonds link cysteine 4-cysteine 54, cysteine 13-cysteine 37, and cysteine 29-cysteine 50.

This sequence belongs to the venom Kunitz-type family. Sea anemone type 2 potassium channel toxin subfamily.

The protein localises to the secreted. It is found in the nematocyst. This protease inhibitor shows two different activities, it inhibits both the capsaicin receptor TRPV1 and serine proteases. It partially blocks the capsaicin- and acid-induced response of TRPV1, a receptor of the pain pathway. It also weakly inhibits trypsin and chymotrypsin activity (Ki=0.5 uM and Ki=7 uM, respectively). In addition, it may also alter tachykinin levels by suppressing endogenous proteases. In vivo, it shows antinociceptive and analgesic activities. It significantly prolongs paw withdrawal latency and blocks heat-induced and chemical-induced acute pain. In addition, it also shows anti-inflammatory and analgesic effects in models of osteoarthritis and rheumatoid arthritis. In vivo, unlike other TRPV1 antagonists whose activity is associated with hyperthermia, this protein has the remarkable feature of dropping core body temperature. The sequence is that of TauPI-stichotoxin-Hcr2d from Radianthus crispa (Leathery sea anemone).